We begin with the raw amino-acid sequence, 66 residues long: Large ribosomal subunit protein bL31 (66 aa).

Zn(2+)-binding residues include Cys16, Cys18, Cys36, and Cys39.

This sequence belongs to the bacterial ribosomal protein bL31 family. Type A subfamily. Part of the 50S ribosomal subunit. It depends on Zn(2+) as a cofactor.

Its function is as follows. Binds the 23S rRNA. The polypeptide is Large ribosomal subunit protein bL31 (Campylobacter curvus (strain 525.92)).